Consider the following 256-residue polypeptide: UPF0259 membrane protein YPO2199/y2042/YP_1997 (256 aa).

A run of 6 helical transmembrane segments spans residues 20-40 (IAAILLLALLTAFITVMLNQT), 90-110 (FSALVGNVLLVGGLLTLIAMV), 118-138 (ALQAIGLSLPILPRLLVLMFI), 141-161 (LVIQLGLTFFIVPGVAIAIAL), 192-212 (LIVPAMMLWIAVKLLLLFLIS), and 221-241 (IATIVLSTLSNLASALLLVYL).

This sequence belongs to the UPF0259 family.

The protein localises to the cell inner membrane. This is UPF0259 membrane protein YPO2199/y2042/YP_1997 from Yersinia pestis.